The sequence spans 318 residues: WRKY transcription factor 28 (318 aa).

2 stretches are compositionally biased toward polar residues: residues 74-84 (SSEVFNSSIDQ) and 106-115 (RVSPSNSSSS). Residues 74-158 (SSEVFNSSID…KTEVKKQREP (85 aa)) are disordered. Basic and acidic residues-rich tracts occupy residues 116–126 (EADHPGEDSGK) and 148–158 (KKTEVKKQREP). A DNA-binding region (WRKY) is located at residues 166-231 (SEVDHLEDGY…YEGQHNHPIP (66 aa)).

The protein belongs to the WRKY group II-c family.

Its subcellular location is the nucleus. Its function is as follows. Transcription factor. Interacts specifically with the W box (5'-(T)TGAC[CT]-3'), a frequently occurring elicitor-responsive cis-acting element. The sequence is that of WRKY transcription factor 28 (WRKY28) from Arabidopsis thaliana (Mouse-ear cress).